We begin with the raw amino-acid sequence, 118 residues long: Large ribosomal subunit protein uL18 (118 aa).

Positions 1 to 26 (MISKPDKNKIRQKRHRRVRGKLSGTA) are disordered. Residues 10 to 20 (IRQKRHRRVRG) are compositionally biased toward basic residues.

Belongs to the universal ribosomal protein uL18 family. Part of the 50S ribosomal subunit; part of the 5S rRNA/L5/L18/L25 subcomplex. Contacts the 5S and 23S rRNAs.

Its function is as follows. This is one of the proteins that bind and probably mediate the attachment of the 5S RNA into the large ribosomal subunit, where it forms part of the central protuberance. This chain is Large ribosomal subunit protein uL18, found in Streptococcus equi subsp. zooepidemicus (strain H70).